The primary structure comprises 208 residues: Uracil phosphoribosyltransferase (208 aa).

5-phospho-alpha-D-ribose 1-diphosphate is bound by residues arginine 78, arginine 103, and 130–138 (DPMLATGGT). Uracil-binding positions include isoleucine 193 and 198-200 (GDA). Aspartate 199 serves as a coordination point for 5-phospho-alpha-D-ribose 1-diphosphate.

Belongs to the UPRTase family. It depends on Mg(2+) as a cofactor.

The enzyme catalyses UMP + diphosphate = 5-phospho-alpha-D-ribose 1-diphosphate + uracil. It functions in the pathway pyrimidine metabolism; UMP biosynthesis via salvage pathway; UMP from uracil: step 1/1. Allosterically activated by GTP. Catalyzes the conversion of uracil and 5-phospho-alpha-D-ribose 1-diphosphate (PRPP) to UMP and diphosphate. The sequence is that of Uracil phosphoribosyltransferase from Nitratidesulfovibrio vulgaris (strain DSM 19637 / Miyazaki F) (Desulfovibrio vulgaris).